We begin with the raw amino-acid sequence, 639 residues long: 3D-(3,5/4)-trihydroxycyclohexane-1,2-dione hydrolase (639 aa).

Residue E62 participates in thiamine diphosphate binding. The segment at 438–518 (SLPGDLQRMW…INILLFDNCG (81 aa)) is thiamine pyrophosphate binding. The Mg(2+) site is built by D489 and N516.

It belongs to the TPP enzyme family. Mg(2+) is required as a cofactor. Thiamine diphosphate serves as cofactor.

The catalysed reaction is 3D-3,5/4-trihydroxycyclohexane-1,2-dione + H2O = 5-deoxy-D-glucuronate + H(+). Its pathway is polyol metabolism; myo-inositol degradation into acetyl-CoA; acetyl-CoA from myo-inositol: step 3/7. Involved in the cleavage of the C1-C2 bond of 3D-(3,5/4)-trihydroxycyclohexane-1,2-dione (THcHDO) to yield 5-deoxy-glucuronate (5DG). The polypeptide is 3D-(3,5/4)-trihydroxycyclohexane-1,2-dione hydrolase (Clostridium perfringens (strain 13 / Type A)).